The chain runs to 424 residues: Putative pachytene checkpoint protein 2 (424 aa).

179–186 (GPPGTGKT) serves as a coordination point for ATP.

Belongs to the AAA ATPase family. PCH2 subfamily.

In terms of biological role, plays a key role in chromosome recombination during meiosis. The polypeptide is Putative pachytene checkpoint protein 2 (pch-2) (Caenorhabditis elegans).